A 142-amino-acid polypeptide reads, in one-letter code: Large ribosomal subunit protein uL11 (142 aa).

This sequence belongs to the universal ribosomal protein uL11 family. In terms of assembly, part of the ribosomal stalk of the 50S ribosomal subunit. Interacts with L10 and the large rRNA to form the base of the stalk. L10 forms an elongated spine to which L12 dimers bind in a sequential fashion forming a multimeric L10(L12)X complex. Post-translationally, one or more lysine residues are methylated.

Its function is as follows. Forms part of the ribosomal stalk which helps the ribosome interact with GTP-bound translation factors. In Serratia marcescens, this protein is Large ribosomal subunit protein uL11.